The following is a 22-amino-acid chain: uncharacterized protein (22 aa).

A helical membrane pass occupies residues 3-22 (MFITGYDINQKQKKRYGLRG).

It belongs to the asfivirus C84L family.

Its subcellular location is the host membrane. This is an uncharacterized protein from Ornithodoros (relapsing fever ticks).